A 433-amino-acid chain; its full sequence is Pectinesterase B (433 aa).

An N-terminal signal peptide occupies residues 1 to 21 (MSLTHYSGLAAAVSMSLILTA). Cys-22 is lipidated: N-palmitoyl cysteine. The S-diacylglycerol cysteine moiety is linked to residue Cys-22. Topologically, residues 22–433 (CGGQTPNSAR…EYNTQVLLHE (412 aa)) are periplasmic. Substrate-binding residues include Thr-202 and Gln-236. Residue Asp-259 is the Proton donor of the active site. The active-site Nucleophile is the Asp-292. Substrate is bound by residues Arg-356 and Trp-358.

The protein belongs to the pectinesterase family.

The protein resides in the cell outer membrane. It carries out the reaction [(1-&gt;4)-alpha-D-galacturonosyl methyl ester](n) + n H2O = [(1-&gt;4)-alpha-D-galacturonosyl](n) + n methanol + n H(+). It functions in the pathway glycan metabolism; pectin degradation; 2-dehydro-3-deoxy-D-gluconate from pectin: step 1/5. Its function is as follows. Probably involved in the degradation of methylated oligogalacturonides present in the periplasm. More active on methylated oligogalacturides than on pectin. In Dickeya dadantii (strain 3937) (Erwinia chrysanthemi (strain 3937)), this protein is Pectinesterase B.